The following is a 179-amino-acid chain: Large ribosomal subunit protein uL5 (179 aa).

The protein belongs to the universal ribosomal protein uL5 family. As to quaternary structure, part of the 50S ribosomal subunit; part of the 5S rRNA/L5/L18/L25 subcomplex. Contacts the 5S rRNA and the P site tRNA. Forms a bridge to the 30S subunit in the 70S ribosome.

This is one of the proteins that bind and probably mediate the attachment of the 5S RNA into the large ribosomal subunit, where it forms part of the central protuberance. In the 70S ribosome it contacts protein S13 of the 30S subunit (bridge B1b), connecting the 2 subunits; this bridge is implicated in subunit movement. Contacts the P site tRNA; the 5S rRNA and some of its associated proteins might help stabilize positioning of ribosome-bound tRNAs. In Salmonella arizonae (strain ATCC BAA-731 / CDC346-86 / RSK2980), this protein is Large ribosomal subunit protein uL5.